The following is a 969-amino-acid chain: Alpha-glucosidase (969 aa).

The signal sequence occupies residues 1–24; sequence MMISTAYQSLFLTALFSAISIAVG. Residues Asn-37, Asn-67, Asn-99, Asn-116, Asn-139, Asn-146, Asn-209, Asn-245, Asn-249, Asn-331, Asn-406, Asn-429, Asn-462, and Asn-470 are each glycosylated (N-linked (GlcNAc...) asparagine). Asp-481 (nucleophile) is an active-site residue. Glu-484 is a catalytic residue. Residues Asn-520, Asn-523, and Asn-589 are each glycosylated (N-linked (GlcNAc...) asparagine). Asp-647 serves as the catalytic Proton donor. Residues Asn-648, Asn-801, Asn-810, Asn-821, Asn-885, Asn-915, Asn-934, Asn-942, Asn-954, and Asn-966 are each glycosylated (N-linked (GlcNAc...) asparagine).

Belongs to the glycosyl hydrolase 31 family.

It is found in the secreted. It carries out the reaction Hydrolysis of terminal, non-reducing (1-&gt;4)-linked alpha-D-glucose residues with release of alpha-D-glucose.. Hydrolyzes malto-oligosaccharides, but has a low activity toward soluble starch. The protein is Alpha-glucosidase (agl1) of Schizosaccharomyces pombe (strain 972 / ATCC 24843) (Fission yeast).